The sequence spans 309 residues: Porphobilinogen deaminase (309 aa).

Position 244 is an S-(dipyrrolylmethanemethyl)cysteine (Cys-244).

This sequence belongs to the HMBS family. In terms of assembly, monomer. The cofactor is dipyrromethane.

It carries out the reaction 4 porphobilinogen + H2O = hydroxymethylbilane + 4 NH4(+). It participates in porphyrin-containing compound metabolism; protoporphyrin-IX biosynthesis; coproporphyrinogen-III from 5-aminolevulinate: step 2/4. In terms of biological role, tetrapolymerization of the monopyrrole PBG into the hydroxymethylbilane pre-uroporphyrinogen in several discrete steps. This is Porphobilinogen deaminase from Agrobacterium fabrum (strain C58 / ATCC 33970) (Agrobacterium tumefaciens (strain C58)).